The primary structure comprises 168 residues: Xanthine-guanine phosphoribosyltransferase (168 aa).

5-phospho-alpha-D-ribose 1-diphosphate contacts are provided by residues 43 to 44 (RG) and 102 to 110 (DDLVDTGAT). Asp103 contacts Mg(2+). Positions 106 and 149 each coordinate guanine. Xanthine-binding residues include Asp106 and Ile149. GMP is bound by residues 106 to 110 (DTGAT) and 148 to 149 (WI).

It belongs to the purine/pyrimidine phosphoribosyltransferase family. XGPT subfamily. As to quaternary structure, homotetramer. Mg(2+) is required as a cofactor.

The protein resides in the cell inner membrane. It catalyses the reaction GMP + diphosphate = guanine + 5-phospho-alpha-D-ribose 1-diphosphate. It carries out the reaction XMP + diphosphate = xanthine + 5-phospho-alpha-D-ribose 1-diphosphate. The catalysed reaction is IMP + diphosphate = hypoxanthine + 5-phospho-alpha-D-ribose 1-diphosphate. Its pathway is purine metabolism; GMP biosynthesis via salvage pathway; GMP from guanine: step 1/1. It functions in the pathway purine metabolism; XMP biosynthesis via salvage pathway; XMP from xanthine: step 1/1. Functionally, purine salvage pathway enzyme that catalyzes the transfer of the ribosyl-5-phosphate group from 5-phospho-alpha-D-ribose 1-diphosphate (PRPP) to the N9 position of the 6-oxopurines guanine and xanthine to form the corresponding ribonucleotides GMP (guanosine 5'-monophosphate) and XMP (xanthosine 5'-monophosphate), with the release of PPi. To a lesser extent, also acts on hypoxanthine. The polypeptide is Xanthine-guanine phosphoribosyltransferase (Nitrobacter hamburgensis (strain DSM 10229 / NCIMB 13809 / X14)).